The primary structure comprises 195 residues: Transcription repressor OFP17 (195 aa).

Residues 130–190 (EDNAVEDACR…SRFYGELCRD (61 aa)) form the OVATE domain.

Its subcellular location is the nucleus. Transcriptional repressor that may regulate multiple aspects of plant growth and development through the regulation of BEL1-LIKE (BLH) and KNOX TALE (KNAT) homeodomain transcription factors. The protein is Transcription repressor OFP17 (OFP17) of Arabidopsis thaliana (Mouse-ear cress).